A 174-amino-acid chain; its full sequence is Large ribosomal subunit protein uL10 (174 aa).

This sequence belongs to the universal ribosomal protein uL10 family. As to quaternary structure, part of the ribosomal stalk of the 50S ribosomal subunit. The N-terminus interacts with L11 and the large rRNA to form the base of the stalk. The C-terminus forms an elongated spine to which L12 dimers bind in a sequential fashion forming a multimeric L10(L12)X complex.

Its function is as follows. Forms part of the ribosomal stalk, playing a central role in the interaction of the ribosome with GTP-bound translation factors. The polypeptide is Large ribosomal subunit protein uL10 (Methylibium petroleiphilum (strain ATCC BAA-1232 / LMG 22953 / PM1)).